Here is a 206-residue protein sequence, read N- to C-terminus: Flavin reductase (NADPH) (206 aa).

NADP(+) contacts are provided by Gly10, Thr12, Gly13, Gln14, Thr15, Arg35, Ser38, and Arg39. A Phosphoserine modification is found at Ser42. Asp54, Val55, Leu75, Gly76, and Arg78 together coordinate NADP(+). Ser82 is subject to Phosphoserine. NADP(+) is bound by residues Met87, Cys109, His132, His153, and Ile154. Catalysis depends on Cys109, which acts as the S-nitroso-cysteine intermediate; for S-nitroso-CoA-dependent nitrosyltransferase activity. Cys188 acts as the S-nitroso-cysteine intermediate; for S-nitroso-CoA-dependent nitrosyltransferase activity in catalysis.

This sequence belongs to the BLVRB family. Monomer. In terms of tissue distribution, predominantly expressed in liver and erythrocytes. At lower levels in heart, lung, adrenal gland and cerebrum. Expressed in adult red blood cells.

The protein resides in the cytoplasm. It carries out the reaction reduced riboflavin + NADP(+) = riboflavin + NADPH + 2 H(+). It catalyses the reaction bilirubin IXbeta + NADP(+) = biliverdin IXbeta + NADPH + H(+). The enzyme catalyses FMNH2 + NAD(+) = FMN + NADH + 2 H(+). The catalysed reaction is FMNH2 + NADP(+) = FMN + NADPH + 2 H(+). It carries out the reaction S-nitroso-CoA + L-cysteinyl-[protein] = S-nitroso-L-cysteinyl-[protein] + CoA. It catalyses the reaction L-cysteinyl-[SCAN] + S-nitroso-CoA = S-nitroso-L-cysteinyl-[SCAN] + CoA. The enzyme catalyses S-nitroso-L-cysteinyl-[SCAN] + L-cysteinyl-[protein] = L-cysteinyl-[SCAN] + S-nitroso-L-cysteinyl-[protein]. Mesobiliverdin acts as a competitive inhibitor for flavin reduction, indicating that flavin and tetrapyrrole substrates compete for the same site. Inhibited by a wide range of xanthene-based drugs, such as phloxine B, erythrosin B, tamibarotene, sulfasalazine, olsalazine, febuxostat, ataluren (PTC124) and deferasirox. Functionally, enzyme that can both act as a NAD(P)H-dependent reductase and a S-nitroso-CoA-dependent nitrosyltransferase. Promotes fetal heme degradation during development. Also expressed in adult tissues, where it acts as a regulator of hematopoiesis, intermediary metabolism (glutaminolysis, glycolysis, TCA cycle and pentose phosphate pathway) and insulin signaling. Has a broad specificity oxidoreductase activity by catalyzing the NAD(P)H-dependent reduction of a variety of flavins, such as riboflavin, FAD or FMN, biliverdins, methemoglobin and PQQ (pyrroloquinoline quinone). Contributes to fetal heme catabolism by catalyzing reduction of biliverdin IXbeta into bilirubin IXbeta in the liver. Biliverdin IXbeta, which constitutes the major heme catabolite in the fetus is not present in adult. Does not reduce bilirubin IXalpha. Can also reduce the complexed Fe(3+) iron to Fe(2+) in the presence of FMN and NADPH. Acts as a protein nitrosyltransferase by catalyzing nitrosylation of cysteine residues of target proteins, such as HMOX2, INSR and IRS1. S-nitroso-CoA-dependent nitrosyltransferase activity is mediated via a 'ping-pong' mechanism: BLVRB first associates with both S-nitroso-CoA and protein substrate, nitric oxide group is then transferred from S-nitroso-CoA to Cys-109 and Cys-188 residues of BLVRB and from S-nitroso-BLVRB to the protein substrate. Inhibits insulin signaling by mediating nitrosylation of INSR and IRS1, leading to their inhibition. This chain is Flavin reductase (NADPH), found in Homo sapiens (Human).